A 174-amino-acid chain; its full sequence is Small ribosomal subunit protein uS5 (174 aa).

An S5 DRBM domain is found at 16 to 79; it reads FSELIVSVRR…NAARKNMIRV (64 aa).

Belongs to the universal ribosomal protein uS5 family. In terms of assembly, part of the 30S ribosomal subunit. Contacts proteins S4 and S8.

With S4 and S12 plays an important role in translational accuracy. Its function is as follows. Located at the back of the 30S subunit body where it stabilizes the conformation of the head with respect to the body. This chain is Small ribosomal subunit protein uS5, found in Ehrlichia ruminantium (strain Gardel).